The chain runs to 149 residues: Globin (149 aa).

A Globin domain is found at 2–149; the sequence is VLTKDEFDSL…KIFTGVAGQL (148 aa). Heme is bound at residue His100.

Belongs to the globin family. Monomer.

Its function is as follows. Oxygen binding protein. This chain is Globin, found in Isoparorchis hypselobagri (Giant trematode).